The sequence spans 193 residues: Large ribosomal subunit protein uL5 (193 aa).

This sequence belongs to the universal ribosomal protein uL5 family. Part of the 50S ribosomal subunit; part of the 5S rRNA/L5/L18/L25 subcomplex. Contacts the 5S rRNA and the P site tRNA. Forms a bridge to the 30S subunit in the 70S ribosome.

Functionally, this is one of the proteins that bind and probably mediate the attachment of the 5S RNA into the large ribosomal subunit, where it forms part of the central protuberance. In the 70S ribosome it contacts protein S13 of the 30S subunit (bridge B1b), connecting the 2 subunits; this bridge is implicated in subunit movement. Contacts the P site tRNA; the 5S rRNA and some of its associated proteins might help stabilize positioning of ribosome-bound tRNAs. The sequence is that of Large ribosomal subunit protein uL5 from Corynebacterium urealyticum (strain ATCC 43042 / DSM 7109).